The following is a 184-amino-acid chain: Ferredoxin-thioredoxin reductase subunit A2, chloroplastic (184 aa).

The transit peptide at 1–71 (MTNSYALSPA…SRKNPKSTIR (71 aa)) directs the protein to the chloroplast.

The protein belongs to the ferredoxin thioredoxin reductase alpha subunit family. As to quaternary structure, heterodimer of subunit A (variable subunit) and subunit B (catalytic subunit). Heterodimeric FTR forms a complex with ferredoxin and thioredoxin.

The protein resides in the plastid. Its subcellular location is the chloroplast. In terms of biological role, variable subunit of the ferredoxin-thioredoxin reductase (FTR), which catalyzes the two-electron reduction of thioredoxins by the electrons provided by reduced ferredoxin. The sequence is that of Ferredoxin-thioredoxin reductase subunit A2, chloroplastic from Arabidopsis thaliana (Mouse-ear cress).